We begin with the raw amino-acid sequence, 204 residues long: Inositol diphosphatase DSP5 (204 aa).

The Tyrosine-protein phosphatase domain occupies 19–168 (NFSMVEDEIY…FDVLRLKQCL (150 aa)). The tract at residues 75-87 (FGIEGKTDPPTPM) is WPD loop important for active site topology. C111 (phosphocysteine intermediate) is an active-site residue.

This sequence belongs to the protein-tyrosine phosphatase family. Atypical dual-specificity phosphatase Siw14-like subfamily. Highly expressed in flowers. Expressed at low levels in roots, leaves, stems and siliques.

The catalysed reaction is 5-diphospho-1D-myo-inositol 1,2,3,4,6-pentakisphosphate + H2O = 1D-myo-inositol hexakisphosphate + phosphate + H(+). It carries out the reaction 1,5-bis(diphospho)-1D-myo-inositol 2,3,4,6-tetrakisphosphate + H2O = 1-diphospho-1D-myo-inositol 2,3,4,5,6-pentakisphosphate + phosphate + 2 H(+). The enzyme catalyses 3,5-bis(diphospho)-1D-myo-inositol 1,2,4,6-tetrakisphosphate + H2O = 3-diphospho-1D-myo-inositol 1,2,4,5,6-pentakisphosphate + phosphate + 2 H(+). It catalyses the reaction 6-diphospho-1D-myo-inositol pentakisphosphate + H2O = 1D-myo-inositol hexakisphosphate + phosphate + H(+). Its function is as follows. Cleaves the beta-phosphate at the 5-position of soluble inositol pyrophosphates. Has highest activity on 5-diphosphoinositol 1,2,3,4,6-pentakisphosphate (5-InsP(7)). Possesses low phosphotyrosine phosphatase activity in vitro. Dephosphorylates the phosphoinositides PI(3,5)P2. Hydrolyzes O-methylfluorescein phosphate in vitro. This chain is Inositol diphosphatase DSP5, found in Arabidopsis thaliana (Mouse-ear cress).